The sequence spans 439 residues: Adenylosuccinate synthetase (439 aa).

Residues 25 to 31 (GDEGKGK) and 53 to 55 (GHT) contribute to the GTP site. Catalysis depends on aspartate 26, which acts as the Proton acceptor. Residues aspartate 26 and glycine 53 each contribute to the Mg(2+) site. IMP-binding positions include 26–29 (DEGK), 51–54 (NAGH), threonine 146, arginine 160, asparagine 237, threonine 252, and arginine 316. Residue histidine 54 is the Proton donor of the active site. 312-318 (VTTGRRR) is a binding site for substrate. GTP is bound by residues arginine 318, 344–346 (KLD), and 426–428 (GVG).

It belongs to the adenylosuccinate synthetase family. As to quaternary structure, homodimer. The cofactor is Mg(2+).

It localises to the cytoplasm. It carries out the reaction IMP + L-aspartate + GTP = N(6)-(1,2-dicarboxyethyl)-AMP + GDP + phosphate + 2 H(+). Its pathway is purine metabolism; AMP biosynthesis via de novo pathway; AMP from IMP: step 1/2. Functionally, plays an important role in the de novo pathway and in the salvage pathway of purine nucleotide biosynthesis. Catalyzes the first committed step in the biosynthesis of AMP from IMP. The polypeptide is Adenylosuccinate synthetase (Mycosarcoma maydis (Corn smut fungus)).